A 668-amino-acid polypeptide reads, in one-letter code: UvrABC system protein B (668 aa).

Positions 25 to 170 (NSILLGNKYQ…FVGQKISIKE (146 aa)) constitute a Helicase ATP-binding domain. 38–45 (GVTGSGKT) contacts ATP. The Beta-hairpin signature appears at 91–114 (YYDYYQPESYVPSKDLFIEKEATI). In terms of domain architecture, Helicase C-terminal spans 429 to 595 (QMEDLYSEIQ…TIVKKIQNIL (167 aa)). The UVR domain occupies 622–657 (KKLIDKLKFDLEEAVNDERFEDAIVLRDKIKELSSK).

This sequence belongs to the UvrB family. As to quaternary structure, forms a heterotetramer with UvrA during the search for lesions. Interacts with UvrC in an incision complex.

It localises to the cytoplasm. Functionally, the UvrABC repair system catalyzes the recognition and processing of DNA lesions. A damage recognition complex composed of 2 UvrA and 2 UvrB subunits scans DNA for abnormalities. Upon binding of the UvrA(2)B(2) complex to a putative damaged site, the DNA wraps around one UvrB monomer. DNA wrap is dependent on ATP binding by UvrB and probably causes local melting of the DNA helix, facilitating insertion of UvrB beta-hairpin between the DNA strands. Then UvrB probes one DNA strand for the presence of a lesion. If a lesion is found the UvrA subunits dissociate and the UvrB-DNA preincision complex is formed. This complex is subsequently bound by UvrC and the second UvrB is released. If no lesion is found, the DNA wraps around the other UvrB subunit that will check the other stand for damage. In Borreliella burgdorferi (strain ZS7) (Borrelia burgdorferi), this protein is UvrABC system protein B.